We begin with the raw amino-acid sequence, 930 residues long: G patch domain-containing protein 1 (930 aa).

The span at 1-12 (MAALDSDSDEDL) shows a compositional bias: acidic residues. 2 disordered regions span residues 1 to 41 (MAAL…TVRD) and 170 to 209 (GVGPRVKRKARRQKPDPGVKIYGCALPPGGSEESEDEDDD). Position 2 is an N-acetylalanine (Ala-2). A phosphoserine mark is found at Ser-6 and Ser-8. Residues 152–198 (KLSVGFELLRKMGWKEGQGVGPRVKRKARRQKPDPGVKIYGCALPPG) enclose the G-patch domain. Lys-313 is covalently cross-linked (Glycyl lysine isopeptide (Lys-Gly) (interchain with G-Cter in SUMO2)). Ser-358 is modified (phosphoserine). 4 disordered regions span residues 400-420 (GKAGQDVGTHSRHQLNASKRG), 465-486 (SLAQSASSSRAQASTPDLGHSS), 566-596 (SSRFTHAKEEEDSDQVEVPRDQENDVSDKQS), and 654-930 (PEPA…LRRQ). The segment covering 465–478 (SLAQSASSSRAQAS) has biased composition (low complexity). Composition is skewed to basic and acidic residues over residues 582 to 593 (EVPRDQENDVSD) and 674 to 695 (GSDKSRKPSRWDTSKQEKKEDS). A Phosphoserine modification is found at Ser-715. The segment covering 719–737 (SKEEQAPEPRPDTTVDKAV) has biased composition (basic and acidic residues). Over residues 768-777 (SEEEQDDSED) the composition is skewed to acidic residues. Positions 851 to 886 (KPKKSKERHKSKKEHRRKREKKKKHKKHKHKSKQKN) are enriched in basic residues. The span at 894–903 (SSESTDSSDS) shows a compositional bias: low complexity. Residues 921–930 (RLKCLPLRRQ) are compositionally biased toward basic residues.

It belongs to the GPATCH1 family.

This chain is G patch domain-containing protein 1 (Gpatch1), found in Mus musculus (Mouse).